The chain runs to 244 residues: Orotidine 5'-phosphate decarboxylase (244 aa).

Substrate contacts are provided by residues D10, K32, 59-68 (DLKLHDIPNT), T122, R184, Q193, G213, and R214. K61 serves as the catalytic Proton donor.

The protein belongs to the OMP decarboxylase family. Type 1 subfamily. In terms of assembly, homodimer.

The catalysed reaction is orotidine 5'-phosphate + H(+) = UMP + CO2. Its pathway is pyrimidine metabolism; UMP biosynthesis via de novo pathway; UMP from orotate: step 2/2. Functionally, catalyzes the decarboxylation of orotidine 5'-monophosphate (OMP) to uridine 5'-monophosphate (UMP). The polypeptide is Orotidine 5'-phosphate decarboxylase (Bacillus caldolyticus).